Consider the following 639-residue polypeptide: tRNA 5-methylaminomethyl-2-thiouridine biosynthesis bifunctional protein MnmC (639 aa).

Residues 1–228 (MSEPIEWLED…KRDNLQATYA (228 aa)) form a tRNA (mnm(5)s(2)U34)-methyltransferase region. An FAD-dependent cmnm(5)s(2)U34 oxidoreductase region spans residues 254-639 (VGAGLAGAAV…SERWLGYEPQ (386 aa)).

It in the N-terminal section; belongs to the methyltransferase superfamily. tRNA (mnm(5)s(2)U34)-methyltransferase family. The protein in the C-terminal section; belongs to the DAO family. Requires FAD as cofactor.

The protein localises to the cytoplasm. The catalysed reaction is 5-aminomethyl-2-thiouridine(34) in tRNA + S-adenosyl-L-methionine = 5-methylaminomethyl-2-thiouridine(34) in tRNA + S-adenosyl-L-homocysteine + H(+). Functionally, catalyzes the last two steps in the biosynthesis of 5-methylaminomethyl-2-thiouridine (mnm(5)s(2)U) at the wobble position (U34) in tRNA. Catalyzes the FAD-dependent demodification of cmnm(5)s(2)U34 to nm(5)s(2)U34, followed by the transfer of a methyl group from S-adenosyl-L-methionine to nm(5)s(2)U34, to form mnm(5)s(2)U34. The chain is tRNA 5-methylaminomethyl-2-thiouridine biosynthesis bifunctional protein MnmC from Acidovorax sp. (strain JS42).